A 358-amino-acid polypeptide reads, in one-letter code: Stearoyl-CoA desaturase 2 (358 aa).

Over 1–71 the chain is Cytoplasmic; it reads MPAHILQEIS…EGPPPKLEYV (71 aa). Positions 14–43 are disordered; it reads SATTTITAPPSGGQQNGGEKFEKNPHHWGA. Residues 32–43 are compositionally biased toward basic and acidic residues; that stretch reads EKFEKNPHHWGA. Residues 72–92 traverse the membrane as a helical segment; it reads WRNIVLMALLHIGALYGITLV. Position 74 (Asn74) interacts with substrate. Residues 93–96 lie on the Lumenal side of the membrane; it reads PSCK. Residues 97-117 form a helical membrane-spanning segment; it reads VYTCLFAYLYYVISALGITAG. At 118 to 216 the chain is on the cytoplasmic side; it reads AHRLWSHRTY…EKLVMFQRRY (99 aa). Positions 119 and 124 each coordinate Fe cation. The Histidine box-1 signature appears at 119 to 124; sequence HRLWSH. 3 residues coordinate substrate: Asn147, Arg154, and Asp155. His156, His159, and His160 together coordinate Fe cation. A Histidine box-2 motif is present at residues 156-160; the sequence is HRAHH. Substrate contacts are provided by Arg187 and Lys188. A helical transmembrane segment spans residues 217 to 236; it reads YKPGLLLMCFILPTLVPWYC. Residues 237–240 lie on the Lumenal side of the membrane; that stretch reads WGET. A helical transmembrane segment spans residues 241–262; it reads FVNSLCVSTFLRYAVVLNATWL. Trp261 is a binding site for substrate. Residues 263-358 are Cytoplasmic-facing; the sequence is VNSAAHLYGY…RTGEESCKSG (96 aa). Residues His268, His297, His300, and His301 each contribute to the Fe cation site. The short motif at 297–301 is the Histidine box-3 element; the sequence is HNYHH.

This sequence belongs to the fatty acid desaturase type 1 family. It depends on Fe(2+) as a cofactor. In terms of tissue distribution, detected in brain and adipose tissue, and at much lower levels in testis. Detected in liver when rats are kept on a fat-free diet, but not when their food contains unsaturated fatty acids.

Its subcellular location is the endoplasmic reticulum membrane. It localises to the microsome membrane. It carries out the reaction octadecanoyl-CoA + 2 Fe(II)-[cytochrome b5] + O2 + 2 H(+) = (9Z)-octadecenoyl-CoA + 2 Fe(III)-[cytochrome b5] + 2 H2O. The enzyme catalyses hexadecanoyl-CoA + 2 Fe(II)-[cytochrome b5] + O2 + 2 H(+) = (9Z)-hexadecenoyl-CoA + 2 Fe(III)-[cytochrome b5] + 2 H2O. Stearoyl-CoA desaturase that utilizes O(2) and electrons from reduced cytochrome b5 to introduce the first double bond into saturated fatty acyl-CoA substrates. Catalyzes the insertion of a cis double bond at the delta-9 position into fatty acyl-CoA substrates including palmitoyl-CoA and stearoyl-CoA. Gives rise to a mixture of 16:1 and 18:1 unsaturated fatty acids. Contributes to the biosynthesis of membrane phospholipids, cholesterol esters and triglycerides, especially during embryonic development and in neonates. Important for normal permeability barrier function of the skin in neonates. This Rattus norvegicus (Rat) protein is Stearoyl-CoA desaturase 2 (Scd2).